The sequence spans 365 residues: tRNA/tmRNA (uracil-C(5))-methyltransferase (365 aa).

S-adenosyl-L-methionine-binding residues include glutamine 189, tyrosine 217, asparagine 222, glutamate 238, and aspartate 298. The active-site Nucleophile is the cysteine 323. Glutamate 357 acts as the Proton acceptor in catalysis.

Belongs to the class I-like SAM-binding methyltransferase superfamily. RNA M5U methyltransferase family. TrmA subfamily.

The enzyme catalyses uridine(54) in tRNA + S-adenosyl-L-methionine = 5-methyluridine(54) in tRNA + S-adenosyl-L-homocysteine + H(+). It carries out the reaction uridine(341) in tmRNA + S-adenosyl-L-methionine = 5-methyluridine(341) in tmRNA + S-adenosyl-L-homocysteine + H(+). Functionally, dual-specificity methyltransferase that catalyzes the formation of 5-methyluridine at position 54 (m5U54) in all tRNAs, and that of position 341 (m5U341) in tmRNA (transfer-mRNA). The sequence is that of tRNA/tmRNA (uracil-C(5))-methyltransferase from Shewanella halifaxensis (strain HAW-EB4).